The following is a 182-amino-acid chain: Protein LIGHT-DEPENDENT SHORT HYPOCOTYLS 5 (182 aa).

Residues 1–16 are compositionally biased toward low complexity; that stretch reads MEGETAAKAAASSSSS. Disordered regions lie at residues 1–22 and 138–168; these read MEGE…RYES and ARGI…DAEG. One can recognise an ALOG domain in the interval 19–147; it reads RYESQKRRDW…ARGIPYDKKK (129 aa). The short motif at 145–149 is the Nuclear localization signal element; sequence KKKRK.

This sequence belongs to the plant homeotic and developmental regulators ALOG protein family.

The protein resides in the nucleus. Its function is as follows. Probable transcription regulator that acts as a developmental regulator by promoting cell growth in response to light. The sequence is that of Protein LIGHT-DEPENDENT SHORT HYPOCOTYLS 5 (LSH5) from Arabidopsis thaliana (Mouse-ear cress).